Here is a 376-residue protein sequence, read N- to C-terminus: Chaperone protein DnaJ (376 aa).

Positions 5 to 70 (DYYEVLGVAR…EKRARYDRFG (66 aa)) constitute a J domain. Residues 137 to 215 (GDEVTLRLPK…CKGSGQTQQV (79 aa)) form a CR-type zinc finger. Zn(2+) is bound by residues C150, C153, C167, C170, C189, C192, C203, and C206. 4 CXXCXGXG motif repeats span residues 150–157 (CDECGGSG), 167–174 (CRHCGGAG), 189–196 (CPVCRGEG), and 203–210 (CPKCKGSG).

This sequence belongs to the DnaJ family. In terms of assembly, homodimer. Zn(2+) is required as a cofactor.

The protein localises to the cytoplasm. Participates actively in the response to hyperosmotic and heat shock by preventing the aggregation of stress-denatured proteins and by disaggregating proteins, also in an autonomous, DnaK-independent fashion. Unfolded proteins bind initially to DnaJ; upon interaction with the DnaJ-bound protein, DnaK hydrolyzes its bound ATP, resulting in the formation of a stable complex. GrpE releases ADP from DnaK; ATP binding to DnaK triggers the release of the substrate protein, thus completing the reaction cycle. Several rounds of ATP-dependent interactions between DnaJ, DnaK and GrpE are required for fully efficient folding. Also involved, together with DnaK and GrpE, in the DNA replication of plasmids through activation of initiation proteins. The protein is Chaperone protein DnaJ of Nitratidesulfovibrio vulgaris (strain ATCC 29579 / DSM 644 / CCUG 34227 / NCIMB 8303 / VKM B-1760 / Hildenborough) (Desulfovibrio vulgaris).